The chain runs to 1193 residues: DNA-directed RNA polymerase subunit beta (1193 aa).

The segment covering 1153–1162 has biased composition (acidic residues); that stretch reads EMRDLEDDED. Residues 1153-1193 form a disordered region; the sequence is EMRDLEDDEDAKQNEGLSLPNDEESEELVSADAERDVVTKE. Residues 1184-1193 show a composition bias toward basic and acidic residues; sequence DAERDVVTKE.

This sequence belongs to the RNA polymerase beta chain family. The RNAP catalytic core consists of 2 alpha, 1 beta, 1 beta' and 1 omega subunit. When a sigma factor is associated with the core the holoenzyme is formed, which can initiate transcription.

The catalysed reaction is RNA(n) + a ribonucleoside 5'-triphosphate = RNA(n+1) + diphosphate. DNA-dependent RNA polymerase catalyzes the transcription of DNA into RNA using the four ribonucleoside triphosphates as substrates. This chain is DNA-directed RNA polymerase subunit beta, found in Bacillus licheniformis (strain ATCC 14580 / DSM 13 / JCM 2505 / CCUG 7422 / NBRC 12200 / NCIMB 9375 / NCTC 10341 / NRRL NRS-1264 / Gibson 46).